Consider the following 1500-residue polypeptide: Secreted chitinase LysM12 (1500 aa).

The first 23 residues, 1 to 23, serve as a signal peptide directing secretion; that stretch reads MAPLWNGMAAGLLLSAAVVSGQA. Asparagine 53, asparagine 225, asparagine 251, and asparagine 270 each carry an N-linked (GlcNAc...) asparagine glycan. 2 consecutive LysM domains span residues 303 to 348 and 367 to 415; these read RTQK…HVCC and ATTT…VICI. The 69-residue stretch at 428 to 496 folds into the Chitin-binding type-1 domain; the sequence is DAECGPQVPG…TNGCISHCGM (69 aa). Disulfide bonds link cysteine 431/cysteine 459, cysteine 453/cysteine 465, cysteine 458/cysteine 472, and cysteine 490/cysteine 494. Positions 507–879 constitute a GH18 domain; the sequence is FRSVGYYESY…PGMILQMKSG (373 aa). Residue glutamate 625 is the Proton donor of the active site. Tyrosine 626 lines the chitin pocket. N-linked (GlcNAc...) asparagine glycosylation is found at asparagine 721 and asparagine 800. Position 852 (tryptophan 852) interacts with chitin. Residues asparagine 892 and asparagine 983 are each glycosylated (N-linked (GlcNAc...) asparagine). Positions 1164–1193 are disordered; it reads IPKDIPYPDKTKRKDKDDDDNKKTEATDSE. A compositionally biased stretch (basic and acidic residues) spans 1169 to 1193; sequence PYPDKTKRKDKDDDDNKKTEATDSE.

Belongs to the glycosyl hydrolase 18 family. Chitinase class V subfamily.

The protein resides in the secreted. It catalyses the reaction Random endo-hydrolysis of N-acetyl-beta-D-glucosaminide (1-&gt;4)-beta-linkages in chitin and chitodextrins.. Its function is as follows. Secreted chitinase involved in the degradation of chitin, a component of the cell walls of fungi and exoskeletal elements of some animals (including worms and arthropods). Involved in pathogenesis via manipulation of host defenses for successful infection. The protein is Secreted chitinase LysM12 of Penicillium expansum (Blue mold rot fungus).